The sequence spans 94 residues: Large ribosomal subunit protein uL23 (94 aa).

Belongs to the universal ribosomal protein uL23 family. In terms of assembly, part of the 50S ribosomal subunit. Contacts protein L29, and trigger factor when it is bound to the ribosome.

One of the early assembly proteins it binds 23S rRNA. One of the proteins that surrounds the polypeptide exit tunnel on the outside of the ribosome. Forms the main docking site for trigger factor binding to the ribosome. The polypeptide is Large ribosomal subunit protein uL23 (Listeria innocua serovar 6a (strain ATCC BAA-680 / CLIP 11262)).